We begin with the raw amino-acid sequence, 410 residues long: Chitin deacetylase 3 (410 aa).

The signal sequence occupies residues 1–18; that stretch reads MYGHLSLSTLSLLAVVAA. Positions 19–39 are excised as a propeptide; it reads APFPESWLQPRDSDVSQLFRR. N-linked (GlcNAc...) asparagine glycans are attached at residues N61 and N80. The 191-residue stretch at 124 to 314 folds into the NodB homology domain; the sequence is KVWALSFDDG…KAVANGWSVK (191 aa). The active-site Proton acceptor is D131. An acetate-binding site is contributed by D131. Position 132 (D132) interacts with Co(2+). The N-linked (GlcNAc...) asparagine glycan is linked to N149. Residues H183 and H187 each coordinate Co(2+). Y225 lines the acetate pocket. An N-linked (GlcNAc...) asparagine glycan is attached at N279. H289 functions as the Proton donor in the catalytic mechanism. N293 carries an N-linked (GlcNAc...) asparagine glycan. The GPI-anchor amidated serine moiety is linked to residue S385. The propeptide at 386–410 is removed in mature form; sequence SSWPIANRPSLFVIACGLALAAIMV.

It belongs to the polysaccharide deacetylase family. The cofactor is Co(2+).

It is found in the cell membrane. The catalysed reaction is [(1-&gt;4)-N-acetyl-beta-D-glucosaminyl](n) + n H2O = chitosan + n acetate. In terms of biological role, hydrolyzes the N-acetamido groups of N-acetyl-D-glucosamine residues in chitin to form chitosan and acetate. Chitosan is required to anchor melanin to the cell wall, for maintenance of cell wall integrity, and for proper cytokinesis. Chitosan offers an advantage during infection as it is less readily detected than chitin by host immunosurveillance mechanisms. In Cryptococcus neoformans var. neoformans serotype D (strain JEC21 / ATCC MYA-565) (Filobasidiella neoformans), this protein is Chitin deacetylase 3.